The following is a 104-amino-acid chain: Small ribosomal subunit protein uS10 (104 aa).

It belongs to the universal ribosomal protein uS10 family. As to quaternary structure, part of the 30S ribosomal subunit.

Involved in the binding of tRNA to the ribosomes. This Aliarcobacter butzleri (strain RM4018) (Arcobacter butzleri) protein is Small ribosomal subunit protein uS10.